We begin with the raw amino-acid sequence, 360 residues long: UPF0283 membrane protein Asuc_0957 (360 aa).

The next 3 helical transmembrane spans lie at Val-74–Ile-94, Trp-102–Leu-122, and Ala-215–Leu-235.

This sequence belongs to the UPF0283 family.

The protein localises to the cell inner membrane. The polypeptide is UPF0283 membrane protein Asuc_0957 (Actinobacillus succinogenes (strain ATCC 55618 / DSM 22257 / CCUG 43843 / 130Z)).